The primary structure comprises 426 residues: Actin-like protein 6B (426 aa).

The essential for mediating its function in dendritic development; may contribute to neuronal-specific targeting stretch occupies residues 39-82; it reads TTVGLLAAEEGGGLELEGEKEKKGKIFHIDTNALHVPRDGAEVM.

It belongs to the actin family. As to quaternary structure, component of the multiprotein chromatin-remodeling complexes SWI/SNF: SWI/SNF-A (BAF), SWI/SNF-B (PBAF) and related complexes. The canonical complex contains a catalytic subunit (either SMARCA4/BRG1/BAF190A or SMARCA2/BRM/BAF190B) and at least SMARCE1, ACTL6A/BAF53, SMARCC1/BAF155, SMARCC2/BAF170, and SMARCB1/SNF5/BAF47. Other subunits specific to each of the complexes may also be present permitting several possible combinations developmentally and tissue specific. Component of the BAF complex, which includes at least actin (ACTB), ARID1A/BAF250A, ARID1B/BAF250B, SMARCA2/BRM, SMARCA4/BRG1/BAF190A, ACTL6A/BAF53, ACTL6B/BAF53B, SMARCE1/BAF57, SMARCC1/BAF155, SMARCC2/BAF170, SMARCB1/SNF5/INI1, and one or more SMARCD1/BAF60A, SMARCD2/BAF60B, or SMARCD3/BAF60C. Component of neuron-specific chromatin remodeling complex (nBAF complex) composed of at least, ARID1A/BAF250A or ARID1B/BAF250B, SMARCD1/BAF60A or SMARCD2/BAF60B or SMARCD3/BAF60C, SMARCA2/BRM/BAF190B, SMARCA4/BRG1/BAF190A, SMARCB1/BAF47, SMARCC1/BAF155, SMARCE1/BAF57, SMARCC2/BAF170, DPF1/BAF45B, DPF3/BAF45C, ACTL6B/BAF53B and actin (ACTB). Note that the nBAF complex is polymorphic in regard to the ATPase, SMARCA2 and SMARCA4 occupying mutually exclusive positions. May be a component of the SWI/SNF-B (PBAF) chromatin remodeling complex, at least composed of SMARCA4/BRG1, SMARCB1/BAF47/SNF5, ACTL6A/BAF53A or ACTL6B/BAF53B, SMARCE1/BAF57, SMARCD1/BAF60A, SMARCD2/BAF60B, perhaps SMARCD3/BAF60C, SMARCC1/BAF155, SMARCC2/BAF170, PBRM1/BAF180, ARID2/BAF200 and actin.

Its subcellular location is the nucleus. In terms of biological role, involved in transcriptional activation and repression of select genes by chromatin remodeling (alteration of DNA-nucleosome topology). Component of SWI/SNF chromatin remodeling complexes that carry out key enzymatic activities, changing chromatin structure by altering DNA-histone contacts within a nucleosome in an ATP-dependent manner. Belongs to the neuron-specific chromatin remodeling complex (nBAF complex), as such plays a role in remodeling mononucleosomes in an ATP-dependent fashion, and is required for postmitotic neural development and dendritic outgrowth. During neural development a switch from a stem/progenitor to a postmitotic chromatin remodeling mechanism occurs as neurons exit the cell cycle and become committed to their adult state. The transition from proliferating neural stem/progenitor cells to postmitotic neurons requires a switch in subunit composition of the npBAF and nBAF complexes. As neural progenitors exit mitosis and differentiate into neurons, npBAF complexes which contain ACTL6A/BAF53A and PHF10/BAF45A, are exchanged for homologous alternative ACTL6B/BAF53B and DPF1/BAF45B or DPF3/BAF45C subunits in neuron-specific complexes (nBAF). The npBAF complex is essential for the self-renewal/proliferative capacity of the multipotent neural stem cells. The nBAF complex along with CREST plays a role regulating the activity of genes essential for dendrite growth. ACTL6B/BAF53B is not essential for assembly of the nBAF complex but is required for targeting the complex and CREST to the promoter of genes essential for dendritic growth. Essential for neuronal maturation and dendrite development. This chain is Actin-like protein 6B (ACTL6B), found in Bos taurus (Bovine).